Consider the following 179-residue polypeptide: MPLVFFARVADVSLGTFRTIVIFRGHKFLASFIGFFEIIIWLVASAQVLTNLDQWYLALAYASGFSVGNYAGISIENRFAIGNELIRCISFNRDVLAGKLREEGFKVVSFDGDMGEAYPVELLLVIEKRRNVPSLIQLIKDLDPTAVYSVSDVKSVYEGPDIFPRRSLLHSTLMLLGKR.

2 consecutive transmembrane segments (helical) span residues 28–48 and 55–75; these read FLASFIGFFEIIIWLVASAQV and WYLALAYASGFSVGNYAGISI.

The protein belongs to the UPF0316 family.

The protein resides in the cell membrane. In Psychromonas ingrahamii (strain DSM 17664 / CCUG 51855 / 37), this protein is UPF0316 protein Ping_1367.